A 214-amino-acid polypeptide reads, in one-letter code: Leucyl/phenylalanyl-tRNA--protein transferase (214 aa).

This sequence belongs to the L/F-transferase family.

The protein localises to the cytoplasm. The catalysed reaction is N-terminal L-lysyl-[protein] + L-leucyl-tRNA(Leu) = N-terminal L-leucyl-L-lysyl-[protein] + tRNA(Leu) + H(+). The enzyme catalyses N-terminal L-arginyl-[protein] + L-leucyl-tRNA(Leu) = N-terminal L-leucyl-L-arginyl-[protein] + tRNA(Leu) + H(+). It carries out the reaction L-phenylalanyl-tRNA(Phe) + an N-terminal L-alpha-aminoacyl-[protein] = an N-terminal L-phenylalanyl-L-alpha-aminoacyl-[protein] + tRNA(Phe). Functions in the N-end rule pathway of protein degradation where it conjugates Leu, Phe and, less efficiently, Met from aminoacyl-tRNAs to the N-termini of proteins containing an N-terminal arginine or lysine. The sequence is that of Leucyl/phenylalanyl-tRNA--protein transferase from Cereibacter sphaeroides (strain ATCC 17029 / ATH 2.4.9) (Rhodobacter sphaeroides).